Consider the following 155-residue polypeptide: Large ribosomal subunit protein uL13 (155 aa).

It belongs to the universal ribosomal protein uL13 family. In terms of assembly, part of the 50S ribosomal subunit.

Its function is as follows. This protein is one of the early assembly proteins of the 50S ribosomal subunit, although it is not seen to bind rRNA by itself. It is important during the early stages of 50S assembly. In Rickettsia conorii (strain ATCC VR-613 / Malish 7), this protein is Large ribosomal subunit protein uL13.